The following is a 239-amino-acid chain: UDP-2,3-diacylglucosamine hydrolase (239 aa).

Mn(2+)-binding residues include Asp-8, His-10, Asp-41, Asn-78, and His-113. Position 78–79 (78–79) interacts with substrate; that stretch reads NR. Residues Asp-121, Ser-159, Asn-163, Lys-166, and His-194 each contribute to the substrate site. Residues His-194 and His-196 each coordinate Mn(2+).

Belongs to the LpxH family. It depends on Mn(2+) as a cofactor.

The protein resides in the cell inner membrane. It catalyses the reaction UDP-2-N,3-O-bis[(3R)-3-hydroxytetradecanoyl]-alpha-D-glucosamine + H2O = 2-N,3-O-bis[(3R)-3-hydroxytetradecanoyl]-alpha-D-glucosaminyl 1-phosphate + UMP + 2 H(+). The protein operates within glycolipid biosynthesis; lipid IV(A) biosynthesis; lipid IV(A) from (3R)-3-hydroxytetradecanoyl-[acyl-carrier-protein] and UDP-N-acetyl-alpha-D-glucosamine: step 4/6. Its function is as follows. Hydrolyzes the pyrophosphate bond of UDP-2,3-diacylglucosamine to yield 2,3-diacylglucosamine 1-phosphate (lipid X) and UMP by catalyzing the attack of water at the alpha-P atom. Involved in the biosynthesis of lipid A, a phosphorylated glycolipid that anchors the lipopolysaccharide to the outer membrane of the cell. The chain is UDP-2,3-diacylglucosamine hydrolase from Shewanella sp. (strain ANA-3).